Here is a 455-residue protein sequence, read N- to C-terminus: Tubulin alpha-1 chain (455 aa).

Residues Q11, E75, S144, G148, T149, T183, N210, and N232 each coordinate GTP. Position 75 (E75) interacts with Mg(2+). Residue E258 is part of the active site.

It belongs to the tubulin family. As to quaternary structure, dimer of alpha and beta chains. A typical microtubule is a hollow water-filled tube with an outer diameter of 25 nm and an inner diameter of 15 nM. Alpha-beta heterodimers associate head-to-tail to form protofilaments running lengthwise along the microtubule wall with the beta-tubulin subunit facing the microtubule plus end conferring a structural polarity. Microtubules usually have 13 protofilaments but different protofilament numbers can be found in some organisms and specialized cells. Requires Mg(2+) as cofactor.

The protein resides in the cytoplasm. Its subcellular location is the cytoskeleton. The catalysed reaction is GTP + H2O = GDP + phosphate + H(+). Functionally, tubulin is the major constituent of microtubules, a cylinder consisting of laterally associated linear protofilaments composed of alpha- and beta-tubulin heterodimers. Microtubules grow by the addition of GTP-tubulin dimers to the microtubule end, where a stabilizing cap forms. Below the cap, tubulin dimers are in GDP-bound state, owing to GTPase activity of alpha-tubulin. This chain is Tubulin alpha-1 chain (nda2), found in Schizosaccharomyces pombe (strain 972 / ATCC 24843) (Fission yeast).